A 184-amino-acid polypeptide reads, in one-letter code: uncharacterized protein (184 aa).

The helical transmembrane segment at 5-27 threads the bilayer; sequence YLLATAMFLIVCVYVISETVNLH.

The protein resides in the membrane. This is an uncharacterized protein from Methanocaldococcus jannaschii (strain ATCC 43067 / DSM 2661 / JAL-1 / JCM 10045 / NBRC 100440) (Methanococcus jannaschii).